The chain runs to 398 residues: O-methyltransferase mpaG (398 aa).

Asp264 provides a ligand contact to S-adenosyl-L-methionine. His306 acts as the Proton acceptor in catalysis. Catalysis depends on residues Glu335 and Glu362.

This sequence belongs to the class I-like SAM-binding methyltransferase superfamily. Cation-independent O-methyltransferase family. COMT subfamily.

It localises to the cytoplasm. It is found in the cytosol. The enzyme catalyses (4E,8E)-10-(4,6-dihydroxy-7-methyl-3-oxo-1,3-dihydro-2-benzofuran-5-yl)-4,8-dimethyldeca-4,8-dienoate + S-adenosyl-L-methionine = (4E,8E)-10-(4-hydroxy-6-methoxy-7-methyl-3-oxo-1,3-dihydro-2-benzofuran-5-yl)-4,8-dimethyldeca-4,8-dienoate + S-adenosyl-L-homocysteine + H(+). The protein operates within secondary metabolite biosynthesis; terpenoid biosynthesis. Its function is as follows. O-methyltransferase; part of the gene cluster that mediates the biosynthesis of mycophenolic acid (MPA), the first isolated antibiotic natural product in the world obtained from a culture of Penicillium brevicompactum in 1893. MpaC methylates farnesyl-DHMP-3C (FDHMP-3C) to yield MFDHMP-3C. The first step of the pathway is the synthesis of 5-methylorsellinic acid (5MOA) by the cytosolic polyketide synthase mpaC. 5MOA is then converted to the phthalide compound 5,7-dihydroxy-4,6-dimethylphthalide (DHMP) by the endoplasmic reticulum-bound cytochrome P450 monooxygenase mpaDE. MpaDE first catalyzes hydroxylation of 5-MOA to 4,6-dihydroxy-2-(hydroxymethyl)-3-methylbenzoic acid (DHMB). MpaDE then acts as a lactone synthase that catalyzes the ring closure to convert DHMB into DHMP. The next step is the prenylation of DHMP by the Golgi apparatus-associated prenyltransferase mpaA to yield farnesyl-DHMP (FDHMP). The ER-bound oxygenase mpaB then mediates the oxidative cleavage the C19-C20 double bond in FDHMP to yield FDHMP-3C via a mycophenolic aldehyde intermediate. The O-methyltransferase mpaG catalyzes the methylation of FDHMP-3C to yield MFDHMP-3C. After the cytosolic methylation of FDHMP-3C, MFDHMP-3C enters into peroxisomes probably via free diffusion due to its low molecular weight. Upon a peroxisomal CoA ligation reaction, catalyzed by a beta-oxidation component enzyme acyl-CoA ligase ACL891, MFDHMP-3C-CoA would then be restricted to peroxisomes for the following beta-oxidation pathway steps. The peroxisomal beta-oxidation machinery than converts MFDHMP-3C-CoA into MPA_CoA, via a beta-oxidation chain-shortening process. Finally mpaH acts as a peroxisomal acyl-CoA hydrolase with high substrate specificity toward MPA-CoA to release the final product MPA. This Penicillium roqueforti (strain FM164) protein is O-methyltransferase mpaG.